Reading from the N-terminus, the 379-residue chain is Anhydro-N-acetylmuramic acid kinase (379 aa).

Position 9–16 (G9–D16) interacts with ATP.

It belongs to the anhydro-N-acetylmuramic acid kinase family.

It catalyses the reaction 1,6-anhydro-N-acetyl-beta-muramate + ATP + H2O = N-acetyl-D-muramate 6-phosphate + ADP + H(+). It functions in the pathway amino-sugar metabolism; 1,6-anhydro-N-acetylmuramate degradation. The protein operates within cell wall biogenesis; peptidoglycan recycling. Catalyzes the specific phosphorylation of 1,6-anhydro-N-acetylmuramic acid (anhMurNAc) with the simultaneous cleavage of the 1,6-anhydro ring, generating MurNAc-6-P. Is required for the utilization of anhMurNAc either imported from the medium or derived from its own cell wall murein, and thus plays a role in cell wall recycling. This Picosynechococcus sp. (strain ATCC 27264 / PCC 7002 / PR-6) (Agmenellum quadruplicatum) protein is Anhydro-N-acetylmuramic acid kinase.